The sequence spans 281 residues: NADPH-dependent 7-cyano-7-deazaguanine reductase (281 aa).

87 to 89 (VES) is a binding site for substrate. 89 to 90 (SK) contacts NADPH. Catalysis depends on Cys188, which acts as the Thioimide intermediate. The Proton donor role is filled by Asp195. 227–228 (HE) contributes to the substrate binding site. 256–257 (RG) contributes to the NADPH binding site.

This sequence belongs to the GTP cyclohydrolase I family. QueF type 2 subfamily. As to quaternary structure, homodimer.

Its subcellular location is the cytoplasm. It carries out the reaction 7-aminomethyl-7-carbaguanine + 2 NADP(+) = 7-cyano-7-deazaguanine + 2 NADPH + 3 H(+). It participates in tRNA modification; tRNA-queuosine biosynthesis. Catalyzes the NADPH-dependent reduction of 7-cyano-7-deazaguanine (preQ0) to 7-aminomethyl-7-deazaguanine (preQ1). This Aliivibrio fischeri (strain MJ11) (Vibrio fischeri) protein is NADPH-dependent 7-cyano-7-deazaguanine reductase.